The sequence spans 636 residues: Biosynthetic arginine decarboxylase (636 aa).

Lysine 101 is subject to N6-(pyridoxal phosphate)lysine. Residue 286–296 (FDVGGGLAVDY) coordinates substrate.

This sequence belongs to the Orn/Lys/Arg decarboxylase class-II family. SpeA subfamily. Mg(2+) is required as a cofactor. The cofactor is pyridoxal 5'-phosphate.

The enzyme catalyses L-arginine + H(+) = agmatine + CO2. The protein operates within amine and polyamine biosynthesis; agmatine biosynthesis; agmatine from L-arginine: step 1/1. Catalyzes the biosynthesis of agmatine from arginine. The sequence is that of Biosynthetic arginine decarboxylase from Shewanella denitrificans (strain OS217 / ATCC BAA-1090 / DSM 15013).